The following is a 149-amino-acid chain: Ribonuclease pancreatic (149 aa).

Residues 1-25 (MGLEKSLMLFPLFVLLLGWVQPSLG) form the signal peptide. Positions 30-49 (AQKFQRQHMDPAGSSSNSPT) are disordered. Lysine 32 and arginine 35 together coordinate substrate. Histidine 37 functions as the Proton acceptor in the catalytic mechanism. Intrachain disulfides connect cysteine 51–cysteine 109, cysteine 65–cysteine 120, cysteine 83–cysteine 135, and cysteine 90–cysteine 97. 66-70 (KPVNT) provides a ligand contact to substrate. A glycan (N-linked (GlcNAc...) asparagine) is linked at asparagine 87. Residue lysine 91 coordinates substrate. Histidine 144 (proton donor) is an active-site residue.

It belongs to the pancreatic ribonuclease family. Monomer. Interacts with and forms tight 1:1 complexes with RNH1. Dimerization of two such complexes may occur. Interaction with RNH1 inhibits this protein. As to expression, pancreas.

It localises to the secreted. It carries out the reaction an [RNA] containing cytidine + H2O = an [RNA]-3'-cytidine-3'-phosphate + a 5'-hydroxy-ribonucleotide-3'-[RNA].. It catalyses the reaction an [RNA] containing uridine + H2O = an [RNA]-3'-uridine-3'-phosphate + a 5'-hydroxy-ribonucleotide-3'-[RNA].. Its function is as follows. Endonuclease that catalyzes the cleavage of RNA on the 3' side of pyrimidine nucleotides. Acts on single-stranded and double-stranded RNA. The protein is Ribonuclease pancreatic (Rnase1) of Mus saxicola (Brown spiny mouse).